The following is a 238-amino-acid chain: Purine nucleoside phosphorylase DeoD-type (238 aa).

His4 contributes to the a purine D-ribonucleoside binding site. Phosphate-binding positions include Gly20, Arg24, Arg43, and 87–90 (RVGS). Residues 179-181 (EME) and 203-204 (SD) contribute to the a purine D-ribonucleoside site. Asp204 serves as the catalytic Proton donor.

This sequence belongs to the PNP/UDP phosphorylase family. Homohexamer; trimer of homodimers.

It catalyses the reaction a purine D-ribonucleoside + phosphate = a purine nucleobase + alpha-D-ribose 1-phosphate. It carries out the reaction a purine 2'-deoxy-D-ribonucleoside + phosphate = a purine nucleobase + 2-deoxy-alpha-D-ribose 1-phosphate. Functionally, catalyzes the reversible phosphorolytic breakdown of the N-glycosidic bond in the beta-(deoxy)ribonucleoside molecules, with the formation of the corresponding free purine bases and pentose-1-phosphate. The chain is Purine nucleoside phosphorylase DeoD-type from Haemophilus influenzae (strain PittGG).